We begin with the raw amino-acid sequence, 678 residues long: Secretin ExeD (678 aa).

An N-terminal signal peptide occupies residues 1-25 (MINKGKSWRLATVAAALMMAGSAWA). The N0 stretch occupies residues 26-122 (TEYSASFKNA…VVDETNPGIG (97 aa)). Residues 124–188 (EMVTRVVPVR…EVVRRVDKAG (65 aa)) are N1. The segment at 189 to 264 (DQEVDIIKLR…MVRQLDRDLQ (76 aa)) is N2. The tract at residues 267 to 347 (GNTRVFYLKY…ELEQVVAKLD (81 aa)) is N3. A secretin region spans residues 352-602 (QVLVEAIIVE…VFIRPTILRD (251 aa)). A s domain region spans residues 604-678 (HVYSGISSNK…GAQPFVQGNK (75 aa)).

It belongs to the bacterial secretin family. GSP D subfamily. As to quaternary structure, forms a cylindrical channel with 15 subunits.

Its subcellular location is the cell outer membrane. Functionally, involved in a type II secretion system (T2SS, formerly general secretion pathway, GSP) for the export of proteins. This subunit forms the outer membrane channel. The polypeptide is Secretin ExeD (exeD) (Aeromonas salmonicida).